The chain runs to 249 residues: Type III pantothenate kinase (249 aa).

Residue 6–13 coordinates ATP; it reads DCGNSFIK. Residues Tyr93 and 100–103 contribute to the substrate site; that span reads GMDR. Catalysis depends on Asp102, which acts as the Proton acceptor. Residue Asp122 participates in K(+) binding. Residue Thr125 participates in ATP binding. Residue Thr181 coordinates substrate.

It belongs to the type III pantothenate kinase family. In terms of assembly, homodimer. NH4(+) is required as a cofactor. It depends on K(+) as a cofactor.

It localises to the cytoplasm. The enzyme catalyses (R)-pantothenate + ATP = (R)-4'-phosphopantothenate + ADP + H(+). It participates in cofactor biosynthesis; coenzyme A biosynthesis; CoA from (R)-pantothenate: step 1/5. Its function is as follows. Catalyzes the phosphorylation of pantothenate (Pan), the first step in CoA biosynthesis. This chain is Type III pantothenate kinase, found in Pseudomonas putida (strain ATCC 47054 / DSM 6125 / CFBP 8728 / NCIMB 11950 / KT2440).